The sequence spans 435 residues: E3 ubiquitin-protein ligase RNFT1 (435 aa).

The tract at residues 1 to 62 is disordered; it reads MPLFLLSLPT…SSEDASTPQC (62 aa). Residues 16–34 are compositionally biased toward basic and acidic residues; it reads GHERRQRPEAKTSGSEKKY. Polar residues predominate over residues 40–62; sequence ANRSQLHSPPGTGSSEDASTPQC. 6 helical membrane passes run 158–178, 203–223, 233–253, 256–276, 298–318, and 323–343; these read ILIL…LGIG, IQCA…YYTF, IFLN…IVGI, FILK…PSFI, TFVP…FGNV, and LGIL…FGHL. The interval 368–419 is required for ubiquitin ligase activity and for protection against ER stress-induced cell death; it reads CSDVDDICSICQAEFQKPILLICQHIFCEECMTLWFNREKTCPLCRTVISDH. The RING-type zinc finger occupies 375–413; it reads CSICQAEFQKPILLICQHIFCEECMTLWFNREKTCPLCR.

As to expression, expressed at highest levels in testis, lower levels in heart, liver, lung, and kidney. Not detected in brain, ovary, and uterus. Down-regulated in testis from patients with maturation arrest (MA) or Sertoli cell-only syndrome (SCOS). Ubiquitously expressed with high expression in testis.

Its subcellular location is the endoplasmic reticulum membrane. The enzyme catalyses S-ubiquitinyl-[E2 ubiquitin-conjugating enzyme]-L-cysteine + [acceptor protein]-L-lysine = [E2 ubiquitin-conjugating enzyme]-L-cysteine + N(6)-ubiquitinyl-[acceptor protein]-L-lysine.. Its pathway is protein modification; protein ubiquitination. Its function is as follows. E3 ubiquitin-protein ligase that acts in the endoplasmic reticulum (ER)-associated degradation (ERAD) pathway, which targets misfolded proteins that accumulate in the endoplasmic reticulum (ER) for ubiquitination and subsequent proteasome-mediated degradation. Protects cells from ER stress-induced apoptosis. This Homo sapiens (Human) protein is E3 ubiquitin-protein ligase RNFT1 (RNFT1).